The sequence spans 496 residues: RNA-binding motif protein, Y chromosome, family 1 member A1 (496 aa).

Residues 8–85 enclose the RRM domain; that stretch reads GKLFIGGLNR…KAIKVEQAKK (78 aa). Disordered stretches follow at residues 78–349 and 452–496; these read IKVE…HRDY and KDQR…SSRY. Composition is skewed to low complexity over residues 97 to 114 and 149 to 159; these read PASS…SARG and PVKRGPSSRSG. Positions 175 to 184 are enriched in polar residues; that stretch reads NSWMGSQGPM. Basic and acidic residues-rich tracts occupy residues 204–214, 242–253, 276–289, 313–326, 335–349, and 484–496; these read RNDRMSTRHDG, DNGHSNRDEHSS, AYRD…DESY, GYRD…HESY, SSRE…HRDY, and GESR…SSRY.

In terms of assembly, interacts with splicing factor proteins SFRS3/SRP20, TRA2B/SFRS10, KHDRBS1/SAM68 and KHDRBS3. As to expression, testis-specific.

The protein localises to the nucleus. Functionally, RNA-binding protein involved in pre-mRNA splicing. Required for sperm development. Acts additively with TRA2B to promote exon 7 inclusion of the survival motor neuron SMN. Binds non-specifically to mRNAs. This is RNA-binding motif protein, Y chromosome, family 1 member A1 (RBMY1A1) from Homo sapiens (Human).